Here is a 553-residue protein sequence, read N- to C-terminus: Phosphoenolpyruvate carboxykinase (ATP) (553 aa).

The segment at 1–22 is disordered; sequence MAPPTAVGSSINFEGHPTIKST. ATP is bound at residue 255–262; it reads GLSGTGKT.

The protein belongs to the phosphoenolpyruvate carboxykinase (ATP) family.

It catalyses the reaction oxaloacetate + ATP = phosphoenolpyruvate + ADP + CO2. It participates in carbohydrate biosynthesis; gluconeogenesis. The polypeptide is Phosphoenolpyruvate carboxykinase (ATP) (PCK1) (Candida albicans (Yeast)).